Here is a 442-residue protein sequence, read N- to C-terminus: Protein cereblon (442 aa).

The disordered stretch occupies residues 1 to 45; it reads MAGEGDQQDAAHNMGNHLPLLPAESEEEDEMEVEDQDSKEAKKPN. Acidic residues predominate over residues 24-35; the sequence is ESEEEDEMEVED. A Phosphoserine modification is found at Ser-25. The region spanning 81–319 is the Lon N-terminal domain; that stretch reads IPVLPQVMMI…CELDIMNKCT (239 aa). Residues 318–426 form the CULT domain; sequence CTSLCCKQCQ…LTRSALLPTI (109 aa). 2 residues coordinate Zn(2+): Cys-323 and Cys-326. Residues His-378, Trp-380, and Trp-386 each coordinate (S)-thalidomide. Zn(2+) is bound by residues Cys-391 and Cys-394.

The protein belongs to the CRBN family. In terms of assembly, interacts with KCNT1. Component of a DCX (DDB1-CUL4-X-box) protein ligase complex, at least composed of CRBN, CUL4A, DDB1 and RBX1. Interacts directly with DDB1. Interacts (in pomalidomide-bound form) with IKZF1 and IKZF3. Interacts with ILF2. Interacts with TRAF6 and ECSIT. Post-translationally, ubiquitinated, ubiquitination is mediated by its own DCX protein ligase complex. As to expression, widely expressed. Highly expressed in brain.

The protein resides in the cytoplasm. It localises to the nucleus. It is found in the membrane. The protein operates within protein modification; protein ubiquitination. Functionally, substrate recognition component of a DCX (DDB1-CUL4-X-box) E3 protein ligase complex that mediates the ubiquitination and subsequent proteasomal degradation of target proteins, such as MEIS2, ILF2 or GLUL. Normal degradation of key regulatory proteins is required for normal limb outgrowth and expression of the fibroblast growth factor FGF8. Maintains presynaptic glutamate release and consequently cognitive functions, such as memory and learning, by negatively regulating large-conductance calcium-activated potassium (BK) channels in excitatory neurons. Likely to function by regulating the assembly and neuronal surface expression of BK channels via its interaction with KCNT1. May also be involved in regulating anxiety-like behaviors via a BK channel-independent mechanism. Plays a negative role in TLR4 signaling by interacting with TRAF6 and ECSIT, leading to inhibition of ECSIT ubiquitination, an important step of the signaling. This is Protein cereblon (CRBN) from Homo sapiens (Human).